The sequence spans 494 residues: Aspartyl/glutamyl-tRNA(Asn/Gln) amidotransferase subunit B (494 aa).

Belongs to the GatB/GatE family. GatB subfamily. As to quaternary structure, heterotrimer of A, B and C subunits.

It catalyses the reaction L-glutamyl-tRNA(Gln) + L-glutamine + ATP + H2O = L-glutaminyl-tRNA(Gln) + L-glutamate + ADP + phosphate + H(+). It carries out the reaction L-aspartyl-tRNA(Asn) + L-glutamine + ATP + H2O = L-asparaginyl-tRNA(Asn) + L-glutamate + ADP + phosphate + 2 H(+). In terms of biological role, allows the formation of correctly charged Asn-tRNA(Asn) or Gln-tRNA(Gln) through the transamidation of misacylated Asp-tRNA(Asn) or Glu-tRNA(Gln) in organisms which lack either or both of asparaginyl-tRNA or glutaminyl-tRNA synthetases. The reaction takes place in the presence of glutamine and ATP through an activated phospho-Asp-tRNA(Asn) or phospho-Glu-tRNA(Gln). In Synechococcus elongatus (strain ATCC 33912 / PCC 7942 / FACHB-805) (Anacystis nidulans R2), this protein is Aspartyl/glutamyl-tRNA(Asn/Gln) amidotransferase subunit B.